The chain runs to 122 residues: Large ribosomal subunit protein uL14 (122 aa).

Belongs to the universal ribosomal protein uL14 family. In terms of assembly, part of the 50S ribosomal subunit. Forms a cluster with proteins L3 and L19. In the 70S ribosome, L14 and L19 interact and together make contacts with the 16S rRNA in bridges B5 and B8.

Its function is as follows. Binds to 23S rRNA. Forms part of two intersubunit bridges in the 70S ribosome. The protein is Large ribosomal subunit protein uL14 of Chlorobaculum tepidum (strain ATCC 49652 / DSM 12025 / NBRC 103806 / TLS) (Chlorobium tepidum).